Consider the following 218-residue polypeptide: uncharacterized protein (218 aa).

2 stretches are compositionally biased toward polar residues: residues 1 to 21 and 68 to 102; these read MSSQ…SSEF and LNTS…SSDI. Disordered regions lie at residues 1–39, 63–116, and 170–205; these read MSSQ…RHAS, EKRL…STSG, and GAKR…GTPQ. Over residues 183-195 the composition is skewed to basic and acidic residues; that stretch reads KRQEKQSPLESRH.

This is an uncharacterized protein from Caenorhabditis elegans.